Consider the following 3103-residue polypeptide: Extracellular matrix protein 3 (3103 aa).

A signal peptide spans 1–19 (MASALLCFLAAILPGMIAA). The Extracellular segment spans residues 20–3047 (QNTWVLGTSD…TYELAPKGTN (3028 aa)). CSPG repeat units follow at residues 289 to 388 (PPSL…LEIV), 411 to 499 (APVV…FRMT), 520 to 630 (APIV…FRVV), 656 to 762 (PPEM…FVVQ), 784 to 875 (QPPT…LEIT), 901 to 993 (LPPG…LTLS), 1022 to 1124 (APNV…FRCT), 1145 to 1238 (EEPQ…VLLT), 1259 to 1357 (TPRL…FDIT), 1378 to 1470 (VHPS…FQVT), 1490 to 1579 (KEPV…FIVT), and 1613 to 1710 (APQI…VEVR). N-linked (GlcNAc...) asparagine glycosylation is found at N330 and N453. N-linked (GlcNAc...) asparagine glycosylation is found at N989, N1024, N1042, N1207, N1294, N1321, and N1327. N1542, N1674, N1679, N1725, and N1739 each carry an N-linked (GlcNAc...) asparagine glycan. Calx-beta domains are found at residues 1717 to 1816 (LPNQ…IILH), 1829 to 1942 (AVVT…VKLS), 1956 to 2062 (NVII…LVLN), and 2077 to 2179 (ITIN…LVLG). N2080, N2195, N2274, N2385, and N2932 each carry an N-linked (GlcNAc...) asparagine glycan. A Calx-beta 5 domain is found at 2197 to 2302 (TVVTVHDVGD…MREAFTLHIT (106 aa)). The interval 2983-3013 (SSGIGKRETEHHAISSRQRRQANSEALVDPA) is disordered. Residues 3048-3068 (VVMIAVVIGVILIILLVALVI) form a helical membrane-spanning segment. Topologically, residues 3069–3103 (GVVVRRRQAKQQPVVVVNGSAKVVSNVHFDDNTEV) are cytoplasmic.

It belongs to the FRAS1 family. As to expression, component of extracellular matrix fibers that interact with PMC filopodia during gastrulation (at protein level).

Its subcellular location is the cell membrane. Extracellular matrix protein that may serve as substrate for the migratory primary mesenchyme cells (PMCs), the interaction possibly providing guidance information to migrating PMCs. This is Extracellular matrix protein 3 (ECM3) from Lytechinus variegatus (Green sea urchin).